A 77-amino-acid polypeptide reads, in one-letter code: Translation initiation factor IF-1, chloroplastic (77 aa).

Positions 1-71 (MKEQKWIHEG…TRGRIIYRLR (71 aa)) constitute an S1-like domain.

It belongs to the IF-1 family. Component of the 30S ribosomal translation pre-initiation complex which assembles on the 30S ribosome in the order IF-2 and IF-3, IF-1 and N-formylmethionyl-tRNA(fMet); mRNA recruitment can occur at any time during PIC assembly.

Its subcellular location is the plastid. It localises to the chloroplast. In terms of biological role, one of the essential components for the initiation of protein synthesis. Stabilizes the binding of IF-2 and IF-3 on the 30S subunit to which N-formylmethionyl-tRNA(fMet) subsequently binds. Helps modulate mRNA selection, yielding the 30S pre-initiation complex (PIC). Upon addition of the 50S ribosomal subunit IF-1, IF-2 and IF-3 are released leaving the mature 70S translation initiation complex. This Hedera helix (English ivy) protein is Translation initiation factor IF-1, chloroplastic.